The chain runs to 209 residues: Ribosomal RNA large subunit methyltransferase E (209 aa).

Positions 63, 65, 83, 99, and 124 each coordinate S-adenosyl-L-methionine. Lysine 164 acts as the Proton acceptor in catalysis.

It belongs to the class I-like SAM-binding methyltransferase superfamily. RNA methyltransferase RlmE family.

Its subcellular location is the cytoplasm. The catalysed reaction is uridine(2552) in 23S rRNA + S-adenosyl-L-methionine = 2'-O-methyluridine(2552) in 23S rRNA + S-adenosyl-L-homocysteine + H(+). In terms of biological role, specifically methylates the uridine in position 2552 of 23S rRNA at the 2'-O position of the ribose in the fully assembled 50S ribosomal subunit. The polypeptide is Ribosomal RNA large subunit methyltransferase E (Shewanella loihica (strain ATCC BAA-1088 / PV-4)).